Consider the following 378-residue polypeptide: MVKINASAITYTKGGEISKILSGTGFSIDTETLGPKQVVIQALATPINPSDLNQLAGTYASKPNFTSELDTPVPVAIGGNEGLYKVIEVGSDVTSYKNGDWVIPKMPSFGTWRTHALVTLDKPENPDPFIKVSSEDDKSIDLTQAATVSINPSTAYQLIDQFIKDWDPKGNDWIIQNGGNSQVGKFVVQIAKIRNIKTISVIRDGKPDQDQIVKELLDLGATKVITDKEAESEEYINKIVPGWVNEGKVILALNCVCGKSGSALVSHLTGNHLADYRSPHLVTYGGMSGQPLMYSSSESLFKNVTSKAYWLTANTKRNPQSKVDTVKKVLALYKSGDIKPVPFNGKEFNIKSTSDDYIKLFLKGIAESKTGKQVIVYN.

Tyrosine 59 functions as the Proton donor in the catalytic mechanism. NADP(+) contacts are provided by residues asparagine 151, 180–183, 203–206, 284–287, 309–311, and lysine 372; these read NSQV, RDGK, YGGM, and YWL.

It belongs to the zinc-containing alcohol dehydrogenase family. Quinone oxidoreductase subfamily. In terms of assembly, homodimer.

Its subcellular location is the mitochondrion matrix. It carries out the reaction a 2,3-saturated acyl-[ACP] + NADP(+) = a (2E)-enoyl-[ACP] + NADPH + H(+). Its function is as follows. Catalyzes the NADPH-dependent reduction of trans-2-enoyl thioesters in mitochondrial fatty acid synthesis (fatty acid synthesis type II). Fatty acid chain elongation in mitochondria uses acyl carrier protein (ACP) as an acyl group carrier, but the enzyme accepts both ACP and CoA thioesters as substrates in vitro. Required for respiration and the maintenance of the mitochondrial compartment. The polypeptide is Enoyl-[acyl-carrier-protein] reductase 1, mitochondrial (ETR1) (Debaryomyces hansenii (strain ATCC 36239 / CBS 767 / BCRC 21394 / JCM 1990 / NBRC 0083 / IGC 2968) (Yeast)).